The primary structure comprises 595 residues: Aspartate--tRNA(Asp/Asn) ligase (595 aa).

Residue Glu175 participates in L-aspartate binding. An aspartate region spans residues 199-202 (QQYK). The L-aspartate site is built by Arg221 and His454. Residue 221 to 223 (RDE) coordinates ATP. Glu488 lines the ATP pocket. Arg495 serves as a coordination point for L-aspartate. 540–543 (GIDR) lines the ATP pocket.

It belongs to the class-II aminoacyl-tRNA synthetase family. Type 1 subfamily. Homodimer.

Its subcellular location is the cytoplasm. The catalysed reaction is tRNA(Asx) + L-aspartate + ATP = L-aspartyl-tRNA(Asx) + AMP + diphosphate. Its function is as follows. Aspartyl-tRNA synthetase with relaxed tRNA specificity since it is able to aspartylate not only its cognate tRNA(Asp) but also tRNA(Asn). Reaction proceeds in two steps: L-aspartate is first activated by ATP to form Asp-AMP and then transferred to the acceptor end of tRNA(Asp/Asn). The chain is Aspartate--tRNA(Asp/Asn) ligase from Sinorhizobium medicae (strain WSM419) (Ensifer medicae).